The sequence spans 274 residues: MAVIKMKPTSPGRRAVVKVTREHLHKGQPHAPLLEPQFQKAGRNNNGHITTRHKGGGHKHHYRVVDFKRNKDGIAAKVERIEYDPNRTAHIALVCYADGERRYIIAPRNLEVGATLLSGAEAPIRAGNTLPIRNIPVGSTIHCIELKPGAGAQIARSAGASATLLAREGTYAQVRMRSGEVRKIHIECRATIGEVANEEHSLRQLGKAGVKRWMGIRPTVRGVAMNPVDHPHGGGEGRTGEGRHAVDPWGNLTKGYRTRNNKRTQSMIVSRRKK.

The disordered stretch occupies residues 223–274 (VAMNPVDHPHGGGEGRTGEGRHAVDPWGNLTKGYRTRNNKRTQSMIVSRRKK). Basic and acidic residues predominate over residues 229–246 (DHPHGGGEGRTGEGRHAV).

The protein belongs to the universal ribosomal protein uL2 family. In terms of assembly, part of the 50S ribosomal subunit. Forms a bridge to the 30S subunit in the 70S ribosome.

Its function is as follows. One of the primary rRNA binding proteins. Required for association of the 30S and 50S subunits to form the 70S ribosome, for tRNA binding and peptide bond formation. It has been suggested to have peptidyltransferase activity; this is somewhat controversial. Makes several contacts with the 16S rRNA in the 70S ribosome. This is Large ribosomal subunit protein uL2 from Verminephrobacter eiseniae (strain EF01-2).